Here is a 180-residue protein sequence, read N- to C-terminus: Inner membrane-spanning protein YciB (180 aa).

The next 5 membrane-spanning stretches (helical) occupy residues 25-45 (QNAT…CYVI), 49-69 (VSKL…ITLI), 76-96 (IKIK…MSGI), 118-138 (IILS…NEIV), and 150-170 (FKVF…LPLL).

It belongs to the YciB family.

The protein resides in the cell inner membrane. Functionally, plays a role in cell envelope biogenesis, maintenance of cell envelope integrity and membrane homeostasis. This chain is Inner membrane-spanning protein YciB, found in Rickettsia felis (strain ATCC VR-1525 / URRWXCal2) (Rickettsia azadi).